The primary structure comprises 331 residues: Putative ankyrin repeat protein FPV012 (331 aa).

ANK repeat units lie at residues 11–40, 44–73, 77–106, and 110–139; these read DGYTSLYKETAKGNIKKVVELLYKGVNPNT, DSYTPLHIAAKTGNIKIIRRLIRYGANVDK, DGYTALLIAICTGDIKTCNVLLDEGANPNY, and YGITPLVRIISYYRPTILKLLMDRGANCNQ.

This Vertebrata (FPV) protein is Putative ankyrin repeat protein FPV012.